Consider the following 41-residue polypeptide: MPTRSTNPNKQPVELNRTSLFLGLLLVFVLGILSPATSLTS.

Residues 20–40 (LFLGLLLVFVLGILSPATSLT) form a helical membrane-spanning segment.

It belongs to the PsbL family. As to quaternary structure, PSII is composed of 1 copy each of membrane proteins PsbA, PsbB, PsbC, PsbD, PsbE, PsbF, PsbH, PsbI, PsbJ, PsbK, PsbL, PsbM, PsbT, PsbX, PsbY, PsbZ, Psb30/Ycf12, peripheral proteins PsbO, CyanoQ (PsbQ), PsbU, PsbV and a large number of cofactors. It forms dimeric complexes.

It localises to the cellular thylakoid membrane. In terms of biological role, one of the components of the core complex of photosystem II (PSII). PSII is a light-driven water:plastoquinone oxidoreductase that uses light energy to abstract electrons from H(2)O, generating O(2) and a proton gradient subsequently used for ATP formation. It consists of a core antenna complex that captures photons, and an electron transfer chain that converts photonic excitation into a charge separation. This subunit is found at the monomer-monomer interface and is required for correct PSII assembly and/or dimerization. The sequence is that of Photosystem II reaction center protein L from Synechococcus sp. (strain ATCC 27144 / PCC 6301 / SAUG 1402/1) (Anacystis nidulans).